We begin with the raw amino-acid sequence, 453 residues long: Glutamate-rich protein 5 (453 aa).

3 disordered regions span residues 1-38, 66-377, and 394-453; these read MGCSSSALNKAGDDNRLRSATEESESCFVQPKPRALGR, NGVQ…EHPA, and TNEE…HSML. The segment covering 11–21 has biased composition (basic and acidic residues); it reads AGDDNRLRSAT. Ser155 is subject to Phosphoserine. 2 stretches are compositionally biased toward polar residues: residues 230 to 243 and 271 to 283; these read LQETVGENEQSQPL and QETLGENEQSQLR. Composition is skewed to basic and acidic residues over residues 305–332, 364–374, and 394–403; these read EEEKRLQEMLGKDEQPQLRETIPREHGG, IQPERTVESME, and TNEEDQHIEG. Acidic residues predominate over residues 404–413; it reads ETGETVETEM. Basic and acidic residues predominate over residues 414 to 424; the sequence is ESEKVSEGAET.

This is Glutamate-rich protein 5 (ERICH5) from Bos taurus (Bovine).